A 194-amino-acid polypeptide reads, in one-letter code: Thymidylate kinase (194 aa).

An ATP-binding site is contributed by 7–14 (GVDGVGKS).

The protein belongs to the thymidylate kinase family.

It carries out the reaction dTMP + ATP = dTDP + ADP. Functionally, phosphorylation of dTMP to form dTDP in both de novo and salvage pathways of dTTP synthesis. The sequence is that of Thymidylate kinase from Campylobacter curvus (strain 525.92).